Consider the following 199-residue polypeptide: VAMP-like protein YKT62 (199 aa).

The region spanning 7 to 131 is the Longin domain; it reads LVLKCDPETR…PYLKEASDKF (125 aa). Residues 139–199 enclose the v-SNARE coiled-coil homology domain; sequence KLLKIQRELD…KKTNSCCTLL (61 aa). C195 carries the S-palmitoyl cysteine lipid modification. C196 is subject to Cysteine methyl ester. C196 is lipidated: S-geranylgeranyl cysteine. Positions 197–199 are cleaved as a propeptide — removed in mature form; sequence TLL.

It belongs to the synaptobrevin family. As to quaternary structure, interacts with SYP41. Core constituent of the SNARE complex required for membrane fusion at the trans-Golgi network.

Its subcellular location is the cell membrane. Involved in the secretory pathway. Essential for membrane fusion mediated by either SYP41 or SYP61; triggers the fusion of phospholipid vesicles containing SYP41 or SYP61 and VTI12. In Arabidopsis thaliana (Mouse-ear cress), this protein is VAMP-like protein YKT62.